A 236-amino-acid polypeptide reads, in one-letter code: Pyridoxine 5'-phosphate synthase (236 aa).

3-amino-2-oxopropyl phosphate is bound at residue asparagine 6. Aspartate 8 to histidine 9 serves as a coordination point for 1-deoxy-D-xylulose 5-phosphate. Arginine 17 provides a ligand contact to 3-amino-2-oxopropyl phosphate. Histidine 42 (proton acceptor) is an active-site residue. Arginine 44 and histidine 49 together coordinate 1-deoxy-D-xylulose 5-phosphate. The active-site Proton acceptor is the glutamate 69. Threonine 99 is a binding site for 1-deoxy-D-xylulose 5-phosphate. The active-site Proton donor is the histidine 192. Residues glycine 193 and glycine 216–histidine 217 contribute to the 3-amino-2-oxopropyl phosphate site.

Belongs to the PNP synthase family. Homooctamer; tetramer of dimers.

Its subcellular location is the cytoplasm. The enzyme catalyses 3-amino-2-oxopropyl phosphate + 1-deoxy-D-xylulose 5-phosphate = pyridoxine 5'-phosphate + phosphate + 2 H2O + H(+). The protein operates within cofactor biosynthesis; pyridoxine 5'-phosphate biosynthesis; pyridoxine 5'-phosphate from D-erythrose 4-phosphate: step 5/5. Functionally, catalyzes the complicated ring closure reaction between the two acyclic compounds 1-deoxy-D-xylulose-5-phosphate (DXP) and 3-amino-2-oxopropyl phosphate (1-amino-acetone-3-phosphate or AAP) to form pyridoxine 5'-phosphate (PNP) and inorganic phosphate. The sequence is that of Pyridoxine 5'-phosphate synthase from Aquifex pyrophilus.